A 129-amino-acid chain; its full sequence is Small ribosomal subunit protein uS11 (129 aa).

The protein belongs to the universal ribosomal protein uS11 family. As to quaternary structure, part of the 30S ribosomal subunit. Interacts with proteins S7 and S18. Binds to IF-3.

Its function is as follows. Located on the platform of the 30S subunit, it bridges several disparate RNA helices of the 16S rRNA. Forms part of the Shine-Dalgarno cleft in the 70S ribosome. The sequence is that of Small ribosomal subunit protein uS11 from Staphylococcus haemolyticus (strain JCSC1435).